We begin with the raw amino-acid sequence, 197 residues long: FMN-dependent NADH:quinone oxidoreductase (197 aa).

FMN contacts are provided by residues S10, 16-18, 93-96, and 137-140; these read SQS, MYNF, and TRGG.

The protein belongs to the azoreductase type 1 family. In terms of assembly, homodimer. The cofactor is FMN.

The catalysed reaction is 2 a quinone + NADH + H(+) = 2 a 1,4-benzosemiquinone + NAD(+). It catalyses the reaction N,N-dimethyl-1,4-phenylenediamine + anthranilate + 2 NAD(+) = 2-(4-dimethylaminophenyl)diazenylbenzoate + 2 NADH + 2 H(+). Functionally, quinone reductase that provides resistance to thiol-specific stress caused by electrophilic quinones. In terms of biological role, also exhibits azoreductase activity. Catalyzes the reductive cleavage of the azo bond in aromatic azo compounds to the corresponding amines. This chain is FMN-dependent NADH:quinone oxidoreductase, found in Shewanella loihica (strain ATCC BAA-1088 / PV-4).